Reading from the N-terminus, the 186-residue chain is piRNA-mediated silencing protein C19orf84 (186 aa).

Disordered regions lie at residues 1–42 and 89–186; these read MEQP…NSTD and SQAG…ETEY. Positions 13 to 22 are enriched in polar residues; the sequence is NNLSLPSSGT. The span at 24-36 shows a compositional bias: pro residues; it reads PWPPAPLPAPPPL. The segment covering 114 to 126 has biased composition (basic residues); it reads RPGWGRGLHRRGL. Pro residues predominate over residues 145–157; the sequence is RTPPMTLPSPPTL.

As to quaternary structure, interacts with SPOCD1.

The protein resides in the nucleus. It localises to the nucleoplasm. Functionally, protein adapter involved in piRNA-directed transposon methylation by connecting PIWIL4-piRNA and DNA methylation machineries. The PIWIL4-piRNA pathway plays a central role during spermatogenesis by directing transposon DNA methylation and silencing, thereby preventing their mobilization, which is essential for the germline integrity. The chain is piRNA-mediated silencing protein C19orf84 from Homo sapiens (Human).